A 248-amino-acid polypeptide reads, in one-letter code: Adenosylcobinamide-GDP ribazoletransferase (248 aa).

7 helical membrane-spanning segments follow: residues 24–44, 70–90, 106–126, 134–154, 157–177, 188–210, and 228–248; these read EINL…IGAW, IIIT…GLFS, VGAN…SLFL, IGWL…LLFA, TYAG…WWPV, LGLF…TIIY, and AGGQ…WGLI.

Belongs to the CobS family. Requires Mg(2+) as cofactor.

The protein resides in the cell membrane. It catalyses the reaction alpha-ribazole + adenosylcob(III)inamide-GDP = adenosylcob(III)alamin + GMP + H(+). The catalysed reaction is alpha-ribazole 5'-phosphate + adenosylcob(III)inamide-GDP = adenosylcob(III)alamin 5'-phosphate + GMP + H(+). The protein operates within cofactor biosynthesis; adenosylcobalamin biosynthesis; adenosylcobalamin from cob(II)yrinate a,c-diamide: step 7/7. Functionally, joins adenosylcobinamide-GDP and alpha-ribazole to generate adenosylcobalamin (Ado-cobalamin). Also synthesizes adenosylcobalamin 5'-phosphate from adenosylcobinamide-GDP and alpha-ribazole 5'-phosphate. In Listeria monocytogenes serotype 4b (strain CLIP80459), this protein is Adenosylcobinamide-GDP ribazoletransferase.